A 636-amino-acid chain; its full sequence is Eisosome protein sle1 (636 aa).

The required for targeting the protein to eisosomes stretch occupies residues M1–G297. Disordered stretches follow at residues A111 to N205, Y222 to V284, D313 to F387, Q400 to L451, D467 to A550, and P572 to N604. 5 stretches are compositionally biased toward polar residues: residues P131–Q159, R166–S178, R188–A204, S237–S255, and S315–R354. The segment covering S355–S383 has biased composition (low complexity). Composition is skewed to polar residues over residues Q400 to Q412 and P422 to Q439. Residues T471–A484 are compositionally biased toward low complexity. Basic and acidic residues predominate over residues S503–R512. Residues P572 to Q589 are compositionally biased toward polar residues.

As to quaternary structure, component of eisosomes, large cytoplasmic protein assemblies that localize to specialized domains termed MCCs on the plasma membrane.

The protein localises to the cytoplasm. Its subcellular location is the cell cortex. It localises to the cell tip. Functionally, important for the biogenesis of filamentous eisosomes, large cytoplasmic protein assemblies that localize to specialized domains on the plasma membrane to cluster specific proteins at sites of membrane invaginations. This Schizosaccharomyces pombe (strain 972 / ATCC 24843) (Fission yeast) protein is Eisosome protein sle1 (sle1).